Here is a 552-residue protein sequence, read N- to C-terminus: MAAKDVKFSRDARERMLRGVNILADAVKVTLGPKGRNVVIDKSFGAPRITKDGVTVAKEIELEDKFENMGAQMVREVASKTNDIAGDGTTTATVLAQSIVQEGHKAVAAGMNPMDLKRGIDLAVSDVVWTLIKNATKIKTSEEVAQVGTIAGNGDESVGKMIAEAMQKVGNEGVITVEEAKTAETELEVVEGMQFDRGYLSPYFVTNADKMVADLEDAYILLHEKKLSNLQAMLPVLEAVVQTSKPLLIISEDVEGEALATLVVNKLRGGLKIAAVKAPGFGDRRKAMLEDIAILTGGQVISEDLGIKLENVGLDMLGRAKKVSISKENTTIVDGAGKKEEIQGRVAQIKQQIEETTSDYDKEKLQERLAKLAGGVAVIRVGGATEVEVKEKKDRVDDALNATRAAVEEGIVPGGGVALLRASLSINAVGANSDQTAGISIVRRALQAPARQIAANAGAEASIVAGKILENKGATFGFNAQTGEYGDMIAMGIVDPVKVVRTALQDAASVAGLLVTTEAMIAEAPKKESAGGGGMPGGMGGGGMGGMGGMDF.

ATP is bound by residues 30–33 (TLGP), Lys-51, 87–91 (DGTTT), Gly-415, and Asp-495.

This sequence belongs to the chaperonin (HSP60) family. Forms a cylinder of 14 subunits composed of two heptameric rings stacked back-to-back. Interacts with the co-chaperonin GroES.

It localises to the cytoplasm. It catalyses the reaction ATP + H2O + a folded polypeptide = ADP + phosphate + an unfolded polypeptide.. Together with its co-chaperonin GroES, plays an essential role in assisting protein folding. The GroEL-GroES system forms a nano-cage that allows encapsulation of the non-native substrate proteins and provides a physical environment optimized to promote and accelerate protein folding. This chain is Chaperonin GroEL 3, found in Mesorhizobium japonicum (strain LMG 29417 / CECT 9101 / MAFF 303099) (Mesorhizobium loti (strain MAFF 303099)).